Consider the following 408-residue polypeptide: tRNA(Ile)-lysidine synthase (408 aa).

27 to 32 (SGGGDS) lines the ATP pocket.

The protein belongs to the tRNA(Ile)-lysidine synthase family.

It is found in the cytoplasm. It carries out the reaction cytidine(34) in tRNA(Ile2) + L-lysine + ATP = lysidine(34) in tRNA(Ile2) + AMP + diphosphate + H(+). In terms of biological role, ligates lysine onto the cytidine present at position 34 of the AUA codon-specific tRNA(Ile) that contains the anticodon CAU, in an ATP-dependent manner. Cytidine is converted to lysidine, thus changing the amino acid specificity of the tRNA from methionine to isoleucine. The sequence is that of tRNA(Ile)-lysidine synthase from Caulobacter vibrioides (strain ATCC 19089 / CIP 103742 / CB 15) (Caulobacter crescentus).